A 168-amino-acid chain; its full sequence is Endoribonuclease YbeY (168 aa).

Zn(2+) is bound by residues His-128, His-132, and His-138.

This sequence belongs to the endoribonuclease YbeY family. Zn(2+) serves as cofactor.

The protein localises to the cytoplasm. Functionally, single strand-specific metallo-endoribonuclease involved in late-stage 70S ribosome quality control and in maturation of the 3' terminus of the 16S rRNA. This is Endoribonuclease YbeY from Sphingopyxis alaskensis (strain DSM 13593 / LMG 18877 / RB2256) (Sphingomonas alaskensis).